Reading from the N-terminus, the 1029-residue chain is Myosin phosphatase Rho-interacting protein (1029 aa).

The tract at residues 1-387 is interaction with F-actin; it reads MSAAKENPCR…DRRSTESSMT (387 aa). The PH 1 domain occupies 43 to 150; it reads KPIYGGWLLL…WLEMLMVYPR (108 aa). The interval 152-267 is disordered; the sequence is NKQNQKKKRK…GDRVDGGRKV (116 aa). Residues 179-195 show a composition bias toward low complexity; sequence SSSGGSSGSSSSSSSSS. Phosphoserine is present on residues Ser198, Ser224, Ser226, Ser230, and Ser232. Residues 226 to 237 are compositionally biased toward low complexity; it reads SPVQSPSQSQPP. The segment covering 245–267 has biased composition (basic and acidic residues); that stretch reads TGLDSKEDENILSGDRVDGGRKV. Phosphoserine occurs at positions 271, 275, 294, and 297. 2 disordered regions span residues 279–306 and 333–383; these read AKQD…SRRS and PSSD…RSTE. Phosphothreonine is present on Thr300. Residues 338–354 are compositionally biased toward basic and acidic residues; it reads RQGRSERRAIPRKRDFA. The residue at position 369 (Ser369) is a Phosphoserine. A PH 2 domain is found at 391 to 487; sequence LNFKKGWLTK…WIQTIMKHVL (97 aa). A disordered region spans residues 490 to 614; sequence SAPDVTSSLP…NDGPGMEDTA (125 aa). Residues 492–509 are compositionally biased toward polar residues; the sequence is PDVTSSLPEGKNKSTSFD. Ser497 is subject to Phosphoserine. A compositionally biased stretch (basic and acidic residues) spans 527 to 550; that stretch reads PEQKKSRARERRREGRSKTFDWAE. Residues 550-828 form an interaction with RHOA region; it reads EFRPIQQALA…SVQRELEVLS (279 aa). The segment covering 562 to 571 has biased composition (polar residues); that stretch reads RASTVGSSDS. Residues 583–592 are compositionally biased toward basic and acidic residues; that stretch reads ELERERARRR. The residue at position 622 (Ser622) is a Phosphoserine. Phosphothreonine is present on Thr650. Residues 675–979 adopt a coiled-coil conformation; that stretch reads STHELTSLLE…LKAATEALGE (305 aa). Position 804 is a phosphoserine (Ser804). The interval 828–883 is interaction with PPP1R12A; it reads SEQYSQKCLENAHLAQALEAERQALRQCQRENQELNAHNQELNNRLAAEITRLRTL. A phosphoserine mark is found at Ser981, Ser997, Ser1018, and Ser1020.

In terms of assembly, binds RHOA, PPP1R12A/MBS and PPP1R12C/MBS85 through adjacent coiled coil domains. Interacts with MYZAP. Binds F-actin through its N-terminus.

Its subcellular location is the cytoplasm. The protein localises to the cytoskeleton. Targets myosin phosphatase to the actin cytoskeleton. Required for the regulation of the actin cytoskeleton by RhoA and ROCK1. Depletion leads to an increased number of stress fibers in smooth muscle cells through stabilization of actin fibers by phosphorylated myosin. Overexpression of MRIP as well as its F-actin-binding region leads to disassembly of stress fibers in neuronal cells. The chain is Myosin phosphatase Rho-interacting protein (Mprip) from Rattus norvegicus (Rat).